Consider the following 239-residue polypeptide: UDP-2,3-diacylglucosamine hydrolase (239 aa).

Residues aspartate 8, histidine 10, aspartate 41, asparagine 78, and histidine 113 each coordinate Mn(2+). 78–79 provides a ligand contact to substrate; it reads NR. 5 residues coordinate substrate: aspartate 121, serine 159, asparagine 163, lysine 166, and histidine 194. Positions 194 and 196 each coordinate Mn(2+).

The protein belongs to the LpxH family. Requires Mn(2+) as cofactor.

The protein localises to the cell inner membrane. The enzyme catalyses UDP-2-N,3-O-bis[(3R)-3-hydroxytetradecanoyl]-alpha-D-glucosamine + H2O = 2-N,3-O-bis[(3R)-3-hydroxytetradecanoyl]-alpha-D-glucosaminyl 1-phosphate + UMP + 2 H(+). The protein operates within glycolipid biosynthesis; lipid IV(A) biosynthesis; lipid IV(A) from (3R)-3-hydroxytetradecanoyl-[acyl-carrier-protein] and UDP-N-acetyl-alpha-D-glucosamine: step 4/6. Hydrolyzes the pyrophosphate bond of UDP-2,3-diacylglucosamine to yield 2,3-diacylglucosamine 1-phosphate (lipid X) and UMP by catalyzing the attack of water at the alpha-P atom. Involved in the biosynthesis of lipid A, a phosphorylated glycolipid that anchors the lipopolysaccharide to the outer membrane of the cell. The polypeptide is UDP-2,3-diacylglucosamine hydrolase (Shewanella sp. (strain MR-7)).